Reading from the N-terminus, the 714-residue chain is Fatty acid oxidation complex subunit alpha (714 aa).

The segment at 1–190 is enoyl-CoA hydratase; that stretch reads MDTVSAFKLE…KAGLVDEVVP (190 aa). Positions 306–714 are 3-hydroxyacyl-CoA dehydrogenase; sequence GPLTSIAVLG…TFWPADERLT (409 aa).

In the N-terminal section; belongs to the enoyl-CoA hydratase/isomerase family. It in the central section; belongs to the 3-hydroxyacyl-CoA dehydrogenase family. Heterotetramer of two alpha chains (FadJ) and two beta chains (FadI).

The protein resides in the cytoplasm. It carries out the reaction a (3S)-3-hydroxyacyl-CoA = a (2E)-enoyl-CoA + H2O. The catalysed reaction is a 4-saturated-(3S)-3-hydroxyacyl-CoA = a (3E)-enoyl-CoA + H2O. It catalyses the reaction a (3S)-3-hydroxyacyl-CoA + NAD(+) = a 3-oxoacyl-CoA + NADH + H(+). The enzyme catalyses (3S)-3-hydroxybutanoyl-CoA = (3R)-3-hydroxybutanoyl-CoA. Its pathway is lipid metabolism; fatty acid beta-oxidation. Functionally, catalyzes the formation of a hydroxyacyl-CoA by addition of water on enoyl-CoA. Also exhibits 3-hydroxyacyl-CoA epimerase and 3-hydroxyacyl-CoA dehydrogenase activities. This is Fatty acid oxidation complex subunit alpha from Klebsiella pneumoniae (strain 342).